The sequence spans 521 residues: MEDFKIDLQLPERSQQHNFIYPLLFQEYIYALVNDRDLKRSISFANIGYEKKFRFQIVKRLINRMYKQIHWTTYFSNYSNKRKIYGLIKSLYYKLLSAGFSFLFEIPFSFKFISERKKILKSQNLRSILSIFPFFEDNFSHLKYVLDLLIPNPPHPEILVQKIRSWVQDASSLHLLQFFLQEFCSVKSLITTNKSKRNERFLFLLYNSYVCEYESFFLFLRNQSLHLGSISFVTLFERNIFYGKIECFVELFVQDSQANLRLFKDPDPSMHYARYCGKSILASNGGLLLMPKWQYYIVNFWQCYFYLWFDTERINLSQIASHPFYLMDYISSIAQTPSMVRSKMLENSFLIKNDMKIFDTFVPIIPIIGSLAKAKFCNLLGNPISKPVWSDFSDSDIIERFGRICRNLFHYYSGSSKKRSLYQIKYILRLSCARTLARKHKSTVRAFLQSLGPKFLEKFFTSEEQIIFLTFPNASFNLRGVSKGRIWYFDIVCINEQANFHVDSKFELKGYPRLKPCAMKN.

It belongs to the intron maturase 2 family. MatK subfamily.

The protein resides in the plastid. Its function is as follows. Usually encoded in the trnK tRNA gene intron. Probably assists in splicing its own and other chloroplast group II introns. The polypeptide is Maturase K (Cuscuta exaltata (Tall dodder)).